A 124-amino-acid chain; its full sequence is Small ribosomal subunit protein uS12 (124 aa).

A disordered region spans residues 1–26; the sequence is MPTISQLVGSERKRLTKKTKSPALKA. Aspartate 89 is modified (3-methylthioaspartic acid). The tract at residues 104–124 is disordered; it reads TAGVKDRRQSRSKYGAKAPKD.

The protein belongs to the universal ribosomal protein uS12 family. Part of the 30S ribosomal subunit. Contacts proteins S8 and S17. May interact with IF1 in the 30S initiation complex.

Its function is as follows. With S4 and S5 plays an important role in translational accuracy. Functionally, interacts with and stabilizes bases of the 16S rRNA that are involved in tRNA selection in the A site and with the mRNA backbone. Located at the interface of the 30S and 50S subunits, it traverses the body of the 30S subunit contacting proteins on the other side and probably holding the rRNA structure together. The combined cluster of proteins S8, S12 and S17 appears to hold together the shoulder and platform of the 30S subunit. This chain is Small ribosomal subunit protein uS12, found in Prochlorococcus marinus (strain MIT 9215).